The following is a 155-amino-acid chain: MAGIDEIDEIIVRELRKNSRITLTELGKKVGLTASAVKNRIEKLEKLGVIKGYSAVVDTSFFGEFLTAIIEVELVDPEAPDLAKVLQPILRMRNISDVYKKSGEFQLAIRGTFRDVDSLNSFLKDLRKVYLKNLARRMRVSIVLENFKEAGVILK.

An HTH asnC-type domain is found at 4–65 (IDEIDEIIVR…VVDTSFFGEF (62 aa)). The H-T-H motif DNA-binding region spans 23-42 (LTELGKKVGLTASAVKNRIE).

This is an uncharacterized protein from Pyrococcus abyssi (strain GE5 / Orsay).